The chain runs to 492 residues: ATP synthase subunit beta, chloroplastic (492 aa).

ATP is bound at residue 170–177 (GGAGVGKT).

The protein belongs to the ATPase alpha/beta chains family. In terms of assembly, F-type ATPases have 2 components, CF(1) - the catalytic core - and CF(0) - the membrane proton channel. CF(1) has five subunits: alpha(3), beta(3), gamma(1), delta(1), epsilon(1). CF(0) has four main subunits: a(1), b(1), b'(1) and c(9-12).

It localises to the plastid. Its subcellular location is the chloroplast thylakoid membrane. The catalysed reaction is ATP + H2O + 4 H(+)(in) = ADP + phosphate + 5 H(+)(out). Functionally, produces ATP from ADP in the presence of a proton gradient across the membrane. The catalytic sites are hosted primarily by the beta subunits. This Pinus thunbergii (Japanese black pine) protein is ATP synthase subunit beta, chloroplastic.